We begin with the raw amino-acid sequence, 957 residues long: Retinoblastoma-related protein 1 (957 aa).

A domain A region spans residues 369–569 (TPVSTAMTTA…EKGSSMYNSL (201 aa)). Positions 369 to 808 (TPVSTAMTTA…NEVFIPTVKP (440 aa)) are pocket. The tract at residues 570–677 (IVARPTLSAE…PAAGGETCAE (108 aa)) is spacer. Residues 678 to 808 (TGIGVFLSKI…NEVFIPTVKP (131 aa)) are domain B. The interval 814–854 (GPGTSPNRNNEPKSGGDAASFPESPRLSRFPNLPDMSPKKV) is disordered.

Belongs to the retinoblastoma protein (RB) family.

It localises to the nucleus. Functionally, regulator of biological processes that recruits a histone deacetylase to control gene transcription. May play a role in the entry into mitosis, negatively regulating the cell proliferation. Formation of stable complexes with geminiviridae replication-associated proteins may create a cellular environment which favors viral DNA replication. The sequence is that of Retinoblastoma-related protein 1 (RBR1) from Triticum aestivum (Wheat).